The primary structure comprises 403 residues: Aspartic protease pepA (403 aa).

The signal sequence occupies residues 1-20 (MVLITQLGAALAVFSALTVA). Positions 21 to 67 (APTKGKARFSAPQVGIPKKAKHHPAAAYARALHKFGMKIPKAVSDAA) are cleaved as a propeptide — activation peptide. The Peptidase A1 domain maps to 82–400 (YVTQVTVGGS…DTQGPRIGFA (319 aa)). Asp-98 is an active-site residue. N-linked (GlcNAc...) asparagine glycosylation is present at Asn-270. Residue Asp-293 is part of the active site. The cysteines at positions 329 and 362 are disulfide-linked.

It belongs to the peptidase A1 family. In terms of assembly, monomer.

The protein localises to the secreted. Its function is as follows. Secreted aspartic endopeptidase that allows assimilation of proteinaceous substrates. The scissile peptide bond is attacked by a nucleophilic water molecule activated by two aspartic residues in the active site. Shows a broad primary substrate specificity. Favors hydrophobic residues at the P1 and P1' positions. This chain is Aspartic protease pepA, found in Arthroderma gypseum (strain ATCC MYA-4604 / CBS 118893) (Microsporum gypseum).